The following is a 591-amino-acid chain: L-fucose isomerase (591 aa).

Residues E337 and D361 each act as proton acceptor in the active site. E337, D361, and H528 together coordinate Mn(2+).

This sequence belongs to the L-fucose isomerase family. As to quaternary structure, homohexamer. Mn(2+) serves as cofactor.

It localises to the cytoplasm. It carries out the reaction L-fucose = L-fuculose. Its pathway is carbohydrate degradation; L-fucose degradation; L-lactaldehyde and glycerone phosphate from L-fucose: step 1/3. Converts the aldose L-fucose into the corresponding ketose L-fuculose. The sequence is that of L-fucose isomerase from Escherichia coli (strain ATCC 8739 / DSM 1576 / NBRC 3972 / NCIMB 8545 / WDCM 00012 / Crooks).